The sequence spans 666 residues: MICTECENDAFDEEDDGYYYCQRCGVQVENLIQTGVDDGDLIGEGGGTQGALYNPKHRRTEPQPITPSQPRFTDDTSRYSQFKSQFESENGNKELPREVKRAPDSYVDKEPTEPVDFAAETLSYENYYDEARDRYVKAFLMMITYQCDALVDKFNVTPLIIGLVGPISLRYVALSGVYHKDWANNAIRDSEHQSEDGEVKDAKRLKRHKAEPRNIDGKRAVTIWFGILKKTMPLSSSLVISFLACHQAGAPVLPTDIVRWAREGKLPYLSCFLDIREQMGERSAACPVKVSIMARPFQVISAQMLEARASVIADTIGLPLPPVNFYGIASNYIKQLSIPEDKILDLARLIQNWSLPPELYLSTNEQKLPSRVCVMSILIVAIRMLYNINGLGVWERSLGFVNASDGDSETNSGTAEKATEFDTQELLKNLEAKYHEVAAETLESEKDLVSYLSLGKNEFFAGLEEDSPDDTYRIVDNLWNGYPKDEDIECLPKRGRDWDDDVSLNQLSLYDSRFSDGNNPCSSSSRRNESVSIGLDLSSSEHRESSSPEKLKEIAIKRLITDMGDDLFCYIPPRVKVKRLDYLQYVRKKEDGALIYAAHADYYILLRVCAKVAEIDVRNMHRGVLSFERRLAWIEKRIDQVLHLTRPLMTCKHCCDDGNIGEDQDD.

Residues 1–29 (MICTECENDAFDEEDDGYYYCQRCGVQVE) form an RRN7-type zinc finger. 4 residues coordinate Zn(2+): Cys3, Cys6, Cys21, and Cys24. Residues 30-64 (NLIQTGVDDGDLIGEGGGTQGALYNPKHRRTEPQP) form a B-reader region. Disordered stretches follow at residues 45–110 (GGGT…VDKE) and 189–208 (DSEHQSEDGEVKDAKRLKRH). Residues 65–80 (ITPSQPRFTDDTSRYS) are B-linker. The span at 78–89 (RYSQFKSQFESE) shows a compositional bias: polar residues. The interval 81–285 (QFKSQFESEN…REQMGERSAA (205 aa)) is N-terminal cyclin fold. 2 stretches are compositionally biased toward basic and acidic residues: residues 90-110 (NGNKELPREVKRAPDSYVDKE) and 189-202 (DSEHQSEDGEVKDA). The interval 286–288 (CPV) is C-terminal cyclin fold. A disordered region spans residues 515–548 (SDGNNPCSSSSRRNESVSIGLDLSSSEHRESSSP). Positions 539–548 (SSEHRESSSP) are enriched in basic and acidic residues.

This sequence belongs to the RRN7/TAF1B family. In terms of assembly, interacts with TFIIF. Interacts with MEE14/CBP1, TBP1 and NRPB1 (via CTD). As to expression, expressed at high levels in seedlings, inflorescences and young siliques and at lower levels in roots. Not detected in leaves and stems. Detected in root tips and shoot apical meristems, in anthers, primarily in microspores with weaker expression in mature pollen grains and in the central cell of the mature female gametophyte. Not expressed in synergids, egg cells, antipodal cells, endosperm cells and fertilized egg cells.

Its subcellular location is the nucleus. The protein localises to the nucleolus. Functionally, component of RNA polymerase I core factor complex that acts as a GTF2B/TFIIB-like factor and plays a key role in multiple steps during transcription initiation such as pre-initiation complex (PIC) assembly and postpolymerase recruitment events in polymerase I (Pol I) transcription. Binds rDNA promoters and plays a role in Pol I recruitment. Required for the development of the one-cell zygote and endosperm in embryos. Required for micropylar pollen tube guidance, but has no effect on ovule development and gametophytic cell fate specification. May regulate the transcription of secreted cysteine-rich peptide (CRP) genes in the embryo sac. In Arabidopsis thaliana (Mouse-ear cress), this protein is TATA box-binding protein-associated factor RNA polymerase I subunit B.